The chain runs to 617 residues: Probable Xaa-Pro aminopeptidase P (617 aa).

The Mn(2+) site is built by Asp414, Asp425, Glu523, and Glu537.

Belongs to the peptidase M24B family. Requires Mn(2+) as cofactor.

The enzyme catalyses Release of any N-terminal amino acid, including proline, that is linked to proline, even from a dipeptide or tripeptide.. Catalyzes the removal of a penultimate prolyl residue from the N-termini of peptides. This chain is Probable Xaa-Pro aminopeptidase P (AMPP), found in Ajellomyces capsulatus (strain NAm1 / WU24) (Darling's disease fungus).